Consider the following 164-residue polypeptide: Thiol peroxidase (164 aa).

One can recognise a Thioredoxin domain in the interval 18–163; it reads VKTGETAPEF…FESALEAYRN (146 aa). The Cysteine sulfenic acid (-SOH) intermediate role is filled by cysteine 60. Cysteine 60 and cysteine 93 are oxidised to a cystine.

This sequence belongs to the peroxiredoxin family. Tpx subfamily. As to quaternary structure, homodimer.

It catalyses the reaction a hydroperoxide + [thioredoxin]-dithiol = an alcohol + [thioredoxin]-disulfide + H2O. Functionally, thiol-specific peroxidase that catalyzes the reduction of hydrogen peroxide and organic hydroperoxides to water and alcohols, respectively. Plays a role in cell protection against oxidative stress by detoxifying peroxides. The chain is Thiol peroxidase from Staphylococcus saprophyticus subsp. saprophyticus (strain ATCC 15305 / DSM 20229 / NCIMB 8711 / NCTC 7292 / S-41).